The primary structure comprises 324 residues: Putative S-adenosyl-L-methionine-dependent methyltransferase MMAR_1059 (324 aa).

Residues aspartate 138 and 167 to 168 (DL) contribute to the S-adenosyl-L-methionine site.

The protein belongs to the UPF0677 family.

Exhibits S-adenosyl-L-methionine-dependent methyltransferase activity. The chain is Putative S-adenosyl-L-methionine-dependent methyltransferase MMAR_1059 from Mycobacterium marinum (strain ATCC BAA-535 / M).